The chain runs to 152 residues: Ribosome maturation factor RimP (152 aa).

It belongs to the RimP family.

Its subcellular location is the cytoplasm. Its function is as follows. Required for maturation of 30S ribosomal subunits. This is Ribosome maturation factor RimP from Alteromonas mediterranea (strain DSM 17117 / CIP 110805 / LMG 28347 / Deep ecotype).